Reading from the N-terminus, the 282-residue chain is Putative hydrolase BamMC406_5393 (282 aa).

Residues E124, E126, and D155 each coordinate Mg(2+).

Belongs to the FAH family. Requires Mg(2+) as cofactor.

In Burkholderia ambifaria (strain MC40-6), this protein is Putative hydrolase BamMC406_5393.